Here is a 100-residue protein sequence, read N- to C-terminus: Osteocalcin (100 aa).

Residues 1-23 (MRALTLLALLALATLCITGQAGA) form the signal peptide. A propeptide spanning residues 24-51 (KPSGAESSKGAAFVSKQEGSEVVKRPRR) is cleaved from the precursor. Residues 52 to 98 (YLYQWLGAPAPYPDPLEPKREVCELNPDCDELADHIGFQEAYRRFYG) enclose the Gla domain. 4-hydroxyproline is present on Pro-60. Glu-68, Glu-72, Glu-75, and Asp-81 together coordinate Ca(2+). 4-carboxyglutamate occurs at positions 68, 72, and 75. Cys-74 and Cys-80 form a disulfide bridge.

It belongs to the osteocalcin/matrix Gla protein family. In terms of processing, gamma-carboxyglutamate residues are formed by vitamin K dependent carboxylation by GGCX. These residues are essential for the binding of calcium. Decarboxylation promotes the hormone activity.

The protein localises to the secreted. In terms of biological role, the carboxylated form is one of the main organic components of the bone matrix, which constitutes 1-2% of the total bone protein: it acts as a negative regulator of bone formation and is required to limit bone formation without impairing bone resorption or mineralization. The carboxylated form binds strongly to apatite and calcium. The uncarboxylated form acts as a hormone secreted by osteoblasts, which regulates different cellular processes, such as energy metabolism, male fertility and brain development. Regulates of energy metabolism by acting as a hormone favoring pancreatic beta-cell proliferation, insulin secretion and sensitivity and energy expenditure. Uncarboxylated osteocalcin hormone also promotes testosterone production in the testes: acts as a ligand for G protein-coupled receptor GPRC6A at the surface of Leydig cells, initiating a signaling response that promotes the expression of enzymes required for testosterone synthesis in a CREB-dependent manner. Also acts as a regulator of brain development: osteocalcin hormone crosses the blood-brain barrier and acts as a ligand for GPR158 on neurons, initiating a signaling response that prevents neuronal apoptosis in the hippocampus, favors the synthesis of all monoamine neurotransmitters and inhibits that of gamma-aminobutyric acid (GABA). Osteocalcin also crosses the placenta during pregnancy and maternal osteocalcin is required for fetal brain development. This Macaca mulatta (Rhesus macaque) protein is Osteocalcin (BGLAP).